A 172-amino-acid chain; its full sequence is Adenine phosphoribosyltransferase (172 aa).

Belongs to the purine/pyrimidine phosphoribosyltransferase family. Homodimer.

The protein resides in the cytoplasm. It catalyses the reaction AMP + diphosphate = 5-phospho-alpha-D-ribose 1-diphosphate + adenine. Its pathway is purine metabolism; AMP biosynthesis via salvage pathway; AMP from adenine: step 1/1. Functionally, catalyzes a salvage reaction resulting in the formation of AMP, that is energically less costly than de novo synthesis. This is Adenine phosphoribosyltransferase from Prochlorococcus marinus (strain NATL1A).